The sequence spans 443 residues: Ribosomal protein uS12 methylthiotransferase RimO (443 aa).

An MTTase N-terminal domain is found at 8–118; that stretch reads PKVGFVSLGC…VVNAVHEVVP (111 aa). The [4Fe-4S] cluster site is built by Cys17, Cys53, Cys82, Cys151, Cys155, and Cys158. Positions 137–376 constitute a Radical SAM core domain; that stretch reads LTPRHYAYLK…AHQQAISSAR (240 aa). Positions 378 to 443 constitute a TRAM domain; the sequence is QLRIGKEIEV…DEYDMWAEPV (66 aa).

It belongs to the methylthiotransferase family. RimO subfamily. The cofactor is [4Fe-4S] cluster.

Its subcellular location is the cytoplasm. The enzyme catalyses L-aspartate(89)-[ribosomal protein uS12]-hydrogen + (sulfur carrier)-SH + AH2 + 2 S-adenosyl-L-methionine = 3-methylsulfanyl-L-aspartate(89)-[ribosomal protein uS12]-hydrogen + (sulfur carrier)-H + 5'-deoxyadenosine + L-methionine + A + S-adenosyl-L-homocysteine + 2 H(+). In terms of biological role, catalyzes the methylthiolation of an aspartic acid residue of ribosomal protein uS12. The polypeptide is Ribosomal protein uS12 methylthiotransferase RimO (Pseudomonas putida (strain W619)).